A 286-amino-acid polypeptide reads, in one-letter code: Large ribosomal subunit protein uL3 (286 aa).

Residue glutamine 152 is modified to N5-methylglutamine. The span at glutamate 246–alanine 265 shows a compositional bias: low complexity. Positions glutamate 246–alanine 286 are disordered. Basic and acidic residues predominate over residues alanine 266–alanine 286.

This sequence belongs to the universal ribosomal protein uL3 family. Part of the 50S ribosomal subunit. Forms a cluster with proteins L14 and L19. Post-translationally, methylated by PrmB.

Functionally, one of the primary rRNA binding proteins, it binds directly near the 3'-end of the 23S rRNA, where it nucleates assembly of the 50S subunit. This chain is Large ribosomal subunit protein uL3, found in Roseobacter denitrificans (strain ATCC 33942 / OCh 114) (Erythrobacter sp. (strain OCh 114)).